The sequence spans 1196 residues: DNA-directed RNA polymerase subunit 2 (1196 aa).

The interval 1074-1095 is disordered; it reads SRARGPTQLLTRQAPEGRSRDG. Residues 1133 to 1154 form a C4-type zinc finger; that stretch reads CDSCGQFAHKVPEKKYYTCTGC.

It belongs to the RNA polymerase beta chain family.

The protein localises to the virion. It catalyses the reaction RNA(n) + a ribonucleoside 5'-triphosphate = RNA(n+1) + diphosphate. Functionally, DNA-dependent RNA polymerase catalyzes the transcription of DNA into RNA using the four ribonucleoside triphosphates as substrates. This Acanthamoeba polyphaga mimivirus (APMV) protein is DNA-directed RNA polymerase subunit 2 (RPO2).